A 261-amino-acid chain; its full sequence is Type II restriction enzyme Sau96I (261 aa).

As to quaternary structure, monomer.

It carries out the reaction Endonucleolytic cleavage of DNA to give specific double-stranded fragments with terminal 5'-phosphates.. Its function is as follows. A P subtype restriction enzyme that recognizes the double-stranded sequence 5'-GGNCC-3' and cleaves after G-1. In Staphylococcus aureus, this protein is Type II restriction enzyme Sau96I.